Here is a 133-residue protein sequence, read N- to C-terminus: NADPH-dependent 7-cyano-7-deazaguanine reductase (133 aa).

Cys-46 (thioimide intermediate) is an active-site residue. The active-site Proton donor is Asp-53. Residues 68-70 and 87-88 each bind substrate; these read VEL and HE.

This sequence belongs to the GTP cyclohydrolase I family. QueF type 1 subfamily.

It is found in the cytoplasm. It catalyses the reaction 7-aminomethyl-7-carbaguanine + 2 NADP(+) = 7-cyano-7-deazaguanine + 2 NADPH + 3 H(+). It functions in the pathway tRNA modification; tRNA-queuosine biosynthesis. Its function is as follows. Catalyzes the NADPH-dependent reduction of 7-cyano-7-deazaguanine (preQ0) to 7-aminomethyl-7-deazaguanine (preQ1). The sequence is that of NADPH-dependent 7-cyano-7-deazaguanine reductase from Parasynechococcus marenigrum (strain WH8102).